The following is a 935-amino-acid chain: Pre-mRNA-splicing factor CWC22 homolog (935 aa).

Residues 1-179 (MSRSPSPDSP…PKDLLRTRTG (179 aa)) are disordered. Composition is skewed to basic and acidic residues over residues 13–25 (VRDD…REQS) and 49–70 (ESSR…DEKM). Basic residues predominate over residues 84–148 (QHRRHRESRS…RSPARRRSPV (65 aa)). Residues 159–175 (PTEEPEKKKNDPKDLLR) are compositionally biased toward basic and acidic residues. Residues 212–400 (KKKIHGLVNR…ETAMQIRKDK (189 aa)) form the MIF4G domain. Residues 463 to 489 (ADISSDEEEEVEDDDEESEAEEAPRKT) form a disordered region. Residues 465 to 483 (ISSDEEEEVEDDDEESEAE) show a composition bias toward acidic residues. The MI domain occupies 502–633 (AFRREVYLTL…EWKILADVKM (132 aa)). The segment at 725-935 (KAAQSSSDSS…VGSDDRRRRH (211 aa)) is disordered. Low complexity predominate over residues 729 to 763 (SSSDSSSDSSDSSDSSDSSGSSDSSDDSSSSSSSD). Composition is skewed to basic and acidic residues over residues 780–891 (KKKE…DRKE) and 897–935 (DRRD…RRRH).

The protein belongs to the CWC22 family.

It is found in the nucleus. The protein resides in the nucleus speckle. In terms of biological role, required for early embryogenesis and tissue differentiation. Required for pre-mRNA splicing and for exon-junction complex (EJC) assembly. Hinders EIF4A3 from non-specifically binding RNA and escorts it to the splicing machinery to promote EJC assembly on mature mRNAs. Through its role in EJC assembly, required for nonsense-mediated mRNA decay. The sequence is that of Pre-mRNA-splicing factor CWC22 homolog from Caenorhabditis briggsae.